The primary structure comprises 127 residues: Large ribosomal subunit protein bL12 (127 aa).

The protein belongs to the bacterial ribosomal protein bL12 family. As to quaternary structure, homodimer. Part of the ribosomal stalk of the 50S ribosomal subunit. Forms a multimeric L10(L12)X complex, where L10 forms an elongated spine to which 2 to 4 L12 dimers bind in a sequential fashion. Binds GTP-bound translation factors.

In terms of biological role, forms part of the ribosomal stalk which helps the ribosome interact with GTP-bound translation factors. Is thus essential for accurate translation. The polypeptide is Large ribosomal subunit protein bL12 (Syntrophotalea carbinolica (strain DSM 2380 / NBRC 103641 / GraBd1) (Pelobacter carbinolicus)).